A 471-amino-acid chain; its full sequence is Probable nucleoredoxin 3 (471 aa).

Thioredoxin domains follow at residues 15 to 173 and 179 to 334; these read VSIP…ARRQ and QLLG…KERD.

Belongs to the nucleoredoxin family.

It carries out the reaction [protein]-dithiol + NAD(+) = [protein]-disulfide + NADH + H(+). The catalysed reaction is [protein]-dithiol + NADP(+) = [protein]-disulfide + NADPH + H(+). Probable thiol-disulfide oxidoreductase that may participate in various redox reactions. In Oryza sativa subsp. japonica (Rice), this protein is Probable nucleoredoxin 3.